Here is a 184-residue protein sequence, read N- to C-terminus: Ribosome-recycling factor (184 aa).

This sequence belongs to the RRF family.

The protein resides in the cytoplasm. Responsible for the release of ribosomes from messenger RNA at the termination of protein biosynthesis. May increase the efficiency of translation by recycling ribosomes from one round of translation to another. In Acholeplasma laidlawii (strain PG-8A), this protein is Ribosome-recycling factor.